The sequence spans 282 residues: Sirohydrochlorin cobaltochelatase CbiKC (282 aa).

Residue histidine 166 is the Proton acceptor of the active site. Residues histidine 166 and histidine 228 each contribute to the Co(2+) site.

This sequence belongs to the CbiK family.

The protein resides in the cytoplasm. It catalyses the reaction Co-sirohydrochlorin + 2 H(+) = sirohydrochlorin + Co(2+). The catalysed reaction is siroheme + 2 H(+) = sirohydrochlorin + Fe(2+). Its pathway is cofactor biosynthesis; adenosylcobalamin biosynthesis; cob(II)yrinate a,c-diamide from sirohydrochlorin (anaerobic route): step 1/10. It participates in porphyrin-containing compound metabolism; siroheme biosynthesis; siroheme from sirohydrochlorin: step 1/1. Catalyzes the insertion of Co(2+) into sirohydrochlorin as part of the anaerobic pathway to cobalamin biosynthesis. To a lesser extent, is also able to insert Fe(2+) into sirohydrochlorin, yielding siroheme. This is Sirohydrochlorin cobaltochelatase CbiKC (cbiKc) from Nitratidesulfovibrio vulgaris (strain ATCC 29579 / DSM 644 / CCUG 34227 / NCIMB 8303 / VKM B-1760 / Hildenborough) (Desulfovibrio vulgaris).